The following is a 102-amino-acid chain: NADH-quinone oxidoreductase subunit K (102 aa).

Transmembrane regions (helical) follow at residues 6 to 26 (LEHG…GLMV), 30 to 50 (ILFV…AFVV), and 62 to 82 (VMFI…LAIL).

The protein belongs to the complex I subunit 4L family. As to quaternary structure, NDH-1 is composed of 13 different subunits. Subunits NuoA, H, J, K, L, M, N constitute the membrane sector of the complex.

Its subcellular location is the cell inner membrane. It carries out the reaction a quinone + NADH + 5 H(+)(in) = a quinol + NAD(+) + 4 H(+)(out). Functionally, NDH-1 shuttles electrons from NADH, via FMN and iron-sulfur (Fe-S) centers, to quinones in the respiratory chain. The immediate electron acceptor for the enzyme in this species is believed to be ubiquinone. Couples the redox reaction to proton translocation (for every two electrons transferred, four hydrogen ions are translocated across the cytoplasmic membrane), and thus conserves the redox energy in a proton gradient. The polypeptide is NADH-quinone oxidoreductase subunit K (Pseudomonas syringae pv. syringae (strain B728a)).